We begin with the raw amino-acid sequence, 232 residues long: Large ribosomal subunit protein uL1 (232 aa).

This sequence belongs to the universal ribosomal protein uL1 family. Part of the 50S ribosomal subunit.

In terms of biological role, binds directly to 23S rRNA. The L1 stalk is quite mobile in the ribosome, and is involved in E site tRNA release. Functionally, protein L1 is also a translational repressor protein, it controls the translation of the L11 operon by binding to its mRNA. The chain is Large ribosomal subunit protein uL1 from Variovorax paradoxus (strain S110).